Here is a 134-residue protein sequence, read N- to C-terminus: Small ribosomal subunit protein uS8c (134 aa).

This sequence belongs to the universal ribosomal protein uS8 family. As to quaternary structure, part of the 30S ribosomal subunit.

It is found in the plastid. Its subcellular location is the chloroplast. Its function is as follows. One of the primary rRNA binding proteins, it binds directly to 16S rRNA central domain where it helps coordinate assembly of the platform of the 30S subunit. The chain is Small ribosomal subunit protein uS8c (rps8) from Arabidopsis thaliana (Mouse-ear cress).